A 496-amino-acid chain; its full sequence is Probable cytosol aminopeptidase (496 aa).

Mn(2+)-binding residues include lysine 262 and aspartate 267. Lysine 274 is an active-site residue. Positions 285, 344, and 346 each coordinate Mn(2+). Arginine 348 is a catalytic residue.

The protein belongs to the peptidase M17 family. It depends on Mn(2+) as a cofactor.

Its subcellular location is the cytoplasm. The catalysed reaction is Release of an N-terminal amino acid, Xaa-|-Yaa-, in which Xaa is preferably Leu, but may be other amino acids including Pro although not Arg or Lys, and Yaa may be Pro. Amino acid amides and methyl esters are also readily hydrolyzed, but rates on arylamides are exceedingly low.. It catalyses the reaction Release of an N-terminal amino acid, preferentially leucine, but not glutamic or aspartic acids.. Presumably involved in the processing and regular turnover of intracellular proteins. Catalyzes the removal of unsubstituted N-terminal amino acids from various peptides. The polypeptide is Probable cytosol aminopeptidase (Rhizobium johnstonii (strain DSM 114642 / LMG 32736 / 3841) (Rhizobium leguminosarum bv. viciae)).